The following is a 120-amino-acid chain: Hydrogenase maturation factor HypA (120 aa).

Histidine 2 is a binding site for Ni(2+). The Zn(2+) site is built by cysteine 73, histidine 76, cysteine 89, and cysteine 92.

The protein belongs to the HypA/HybF family.

Its function is as follows. Involved in the maturation of [NiFe] hydrogenases. Required for nickel insertion into the metal center of the hydrogenase. In Deinococcus radiodurans (strain ATCC 13939 / DSM 20539 / JCM 16871 / CCUG 27074 / LMG 4051 / NBRC 15346 / NCIMB 9279 / VKM B-1422 / R1), this protein is Hydrogenase maturation factor HypA.